Here is a 270-residue protein sequence, read N- to C-terminus: MLLVIDAGNTNIVFAVHDGESWLGQWRISTNEARTADEYAAWLLTLFDRVGVNAKAITRAIIGTVVPVALYELRRFCREWLDVVPLVANARLDWGIDVLVDNPNELGADRRLNGLAGRELFGAPLIVVDFGTATTFDVVNSAGQFCGGAIAPGVNLSIDALHRAAARLPRMSIGRPTAAIGRNTSVAMRSGLFWGYVGLVEGLIHRISDEMDAKPTVIATGGLAPLFSEGTPLFDVLAPDLTLDGLRLLADRNTGPPLSYSPERSQGIGQ.

An ATP-binding site is contributed by D6–V13. G107 to R110 contributes to the substrate binding site. D109 acts as the Proton acceptor in catalysis. Residue D129 coordinates K(+). T132 contributes to the ATP binding site. A substrate-binding site is contributed by T184.

The protein belongs to the type III pantothenate kinase family. In terms of assembly, homodimer. The cofactor is NH4(+). It depends on K(+) as a cofactor.

The protein localises to the cytoplasm. The enzyme catalyses (R)-pantothenate + ATP = (R)-4'-phosphopantothenate + ADP + H(+). Its pathway is cofactor biosynthesis; coenzyme A biosynthesis; CoA from (R)-pantothenate: step 1/5. In terms of biological role, catalyzes the phosphorylation of pantothenate (Pan), the first step in CoA biosynthesis. The polypeptide is Type III pantothenate kinase (Gluconobacter oxydans (strain 621H) (Gluconobacter suboxydans)).